The chain runs to 369 residues: Naringenin,2-oxoglutarate 3-dioxygenase (369 aa).

A Fe2OG dioxygenase domain is found at C193–P297. Fe cation-binding residues include H220, D222, and H278. R288 lines the 2-oxoglutarate pocket.

It belongs to the iron/ascorbate-dependent oxidoreductase family. Fe(2+) serves as cofactor. It depends on L-ascorbate as a cofactor.

The catalysed reaction is a (2S)-flavan-4-one + 2-oxoglutarate + O2 = a (2R,3R)-dihydroflavonol + succinate + CO2. It functions in the pathway secondary metabolite biosynthesis; flavonoid biosynthesis. Functionally, catalyzes the 3-beta-hydroxylation of 2S-flavanones to 2R,3R-dihydroflavonols which are intermediates in the biosynthesis of flavonols, anthocyanidins, catechins and proanthocyanidins in plants. The polypeptide is Naringenin,2-oxoglutarate 3-dioxygenase (AN3) (Petunia hybrida (Petunia)).